A 66-amino-acid chain; its full sequence is Photosystem II reaction center protein H (66 aa).

A helical membrane pass occupies residues 29–49 (PIMGLTMVLFLVFLLIILQIY).

This sequence belongs to the PsbH family. PSII is composed of 1 copy each of membrane proteins PsbA, PsbB, PsbC, PsbD, PsbE, PsbF, PsbH, PsbI, PsbJ, PsbK, PsbL, PsbM, PsbT, PsbX, PsbY, PsbZ, Psb30/Ycf12, at least 3 peripheral proteins of the oxygen-evolving complex and a large number of cofactors. It forms dimeric complexes.

The protein resides in the plastid. It localises to the chloroplast thylakoid membrane. Functionally, one of the components of the core complex of photosystem II (PSII), required for its stability and/or assembly. PSII is a light-driven water:plastoquinone oxidoreductase that uses light energy to abstract electrons from H(2)O, generating O(2) and a proton gradient subsequently used for ATP formation. It consists of a core antenna complex that captures photons, and an electron transfer chain that converts photonic excitation into a charge separation. This is Photosystem II reaction center protein H from Thalassiosira pseudonana (Marine diatom).